The sequence spans 99 residues: DNA-binding protein Fis (99 aa).

Residues 1–25 (MFEQKISSEALTTTTSIPATGQITQ) form a disordered region. The segment at residues 75–94 (QTRAATMLGINRGTLRKKLK) is a DNA-binding region (H-T-H motif).

It belongs to the transcriptional regulatory Fis family. In terms of assembly, homodimer.

Functionally, activates ribosomal RNA transcription. Plays a direct role in upstream activation of rRNA promoters. The sequence is that of DNA-binding protein Fis from Psychromonas ingrahamii (strain DSM 17664 / CCUG 51855 / 37).